The chain runs to 176 residues: Peroxiredoxin AHP1 (176 aa).

S2 carries the N-acetylserine modification. In terms of domain architecture, Thioredoxin spans 9–176 (FPAGDYKFQY…SSVESVLAHL (168 aa)). Residue S28 is modified to Phosphoserine. K32 participates in a covalent cross-link: Glycyl lysine isopeptide (Lys-Gly) (interchain with G-Cter in URM1). K48 participates in a covalent cross-link: Glycyl lysine isopeptide (Lys-Gly) (interchain with G-Cter in ubiquitin); alternate. Residue K48 forms a Glycyl lysine isopeptide (Lys-Gly) (interchain with G-Cter in URM1); alternate linkage. S59 is subject to Phosphoserine. The active-site Cysteine sulfenic acid (-SOH) intermediate is the C62. The residue at position 62 (C62) is a Cysteine persulfide. K79 is covalently cross-linked (Glycyl lysine isopeptide (Lys-Gly) (interchain with G-Cter in URM1)). Residue K81 forms a Glycyl lysine isopeptide (Lys-Gly) (interchain with G-Cter in ubiquitin); alternate linkage. Residue K81 forms a Glycyl lysine isopeptide (Lys-Gly) (interchain with G-Cter in URM1); alternate linkage. K107 participates in a covalent cross-link: Glycyl lysine isopeptide (Lys-Gly) (interchain with G-Cter in URM1). K113 is covalently cross-linked (Glycyl lysine isopeptide (Lys-Gly) (interchain with G-Cter in ubiquitin)). The residue at position 116 (S116) is a Phosphoserine. Cysteine persulfide is present on C120. A Glycyl lysine isopeptide (Lys-Gly) (interchain with G-Cter in URM1) cross-link involves residue K124. Residue K156 forms a Glycyl lysine isopeptide (Lys-Gly) (interchain with G-Cter in URM1); alternate linkage. K156 participates in a covalent cross-link: Glycyl lysine isopeptide (Lys-Gly) (interchain with G-Cter in SUMO); alternate.

It belongs to the peroxiredoxin family. Prx5 subfamily. Homodimer; disulfide-linked, upon oxidation. Post-translationally, conjugated to URM1, a ubiquitin-like protein, in response to oxidative stresses. The attachment of URM1 to lysine residues exclusively depends on the presence of a peroxidatic cysteine in the target protein, with low specificity for the particular residue, motif, or structural context at which urmylation can occur. The URM1-conjugation reaction is mechanistically and directly coupled to the process of cysteine persulfidation, transfering the sulfur atom of the URM1 thiocarboxyl group to redox-active cysteine residues in the target protein if it is exposed to oxidative conditions. Persulfidated on specific redox-active cysteine residues. Persulfidation (also called protein S-sulfhydration) may provide a molecular mechanism that enables cells to protect vulnerable cysteine residues from reactive oxygen species (ROS) under stress conditions.

The protein localises to the cytoplasm. It catalyses the reaction a hydroperoxide + [thioredoxin]-dithiol = an alcohol + [thioredoxin]-disulfide + H2O. Functionally, thiol-specific peroxidase that catalyzes the reduction of hydrogen peroxide and organic hydroperoxides to water and alcohols, respectively. Plays a role in cell protection against oxidative stress by detoxifying peroxides and as sensor of hydrogen peroxide-mediated signaling events. Preferentially eliminates organic peroxides rather than hydrogen peroxide. Relays alkyl hydroperoxides as a signal to the transcription factor CAD1/YAP2 by inducing the formation of intramolecular disulfide bonds in CAD1, which causes its nuclear accumulation and activation. Involved in cellular Mn(2+) homeostasis. This is Peroxiredoxin AHP1 from Saccharomyces cerevisiae (strain ATCC 204508 / S288c) (Baker's yeast).